Consider the following 214-residue polypeptide: Thymidylate kinase (214 aa).

Position 10–17 (10–17 (GGEGAGKS)) interacts with ATP.

The protein belongs to the thymidylate kinase family.

The catalysed reaction is dTMP + ATP = dTDP + ADP. Functionally, phosphorylation of dTMP to form dTDP in both de novo and salvage pathways of dTTP synthesis. This Brucella canis (strain ATCC 23365 / NCTC 10854 / RM-666) protein is Thymidylate kinase.